The primary structure comprises 237 residues: MTPQDFYRTLEEDGFSLSSKQKEQFDTYFKLLVEWNTKINLTAITEENEVYLKHFYDSIAPILQGFLANEPIKLLDIGAGAGFPSLPMKILFPNLEVTIIDSLNKRISFLTLLAQELGLENVHFFHGRAEDFGQDKAFRGQFDVVTARAVARMQVLSELTIPFLKIRGKLIALKAQAADQELEEAKNALCLLFGKVIKNHSYQLPNGDSRFITIVEKKKETPNKYPRKAGLPNKKPL.

Residues glycine 78, phenylalanine 83, 129–130 (AE), and arginine 148 each bind S-adenosyl-L-methionine.

The protein belongs to the methyltransferase superfamily. RNA methyltransferase RsmG family.

The protein localises to the cytoplasm. Specifically methylates the N7 position of a guanine in 16S rRNA. This Streptococcus pyogenes serotype M18 (strain MGAS8232) protein is Ribosomal RNA small subunit methyltransferase G.